The chain runs to 416 residues: Tumor necrosis factor receptor superfamily member 16 (416 aa).

Residues 1–19 (MAGFVPLLLLLLPAGPTWG) form the signal peptide. 4 TNFR-Cys repeats span residues 23–57 (KCLT…TVCE), 58–99 (PCLD…DAVC), 100–138 (RCAY…DTVC), and 140–180 (ECPE…DAEC). Disulfide bonds link Cys-24–Cys-35, Cys-36–Cys-49, Cys-39–Cys-56, Cys-59–Cys-75, Cys-78–Cys-91, Cys-81–Cys-99, Cys-101–Cys-114, Cys-117–Cys-130, Cys-120–Cys-138, Cys-141–Cys-156, Cys-159–Cys-172, and Cys-162–Cys-180. Topologically, residues 29-239 (YTTSGECCKA…PVVSRGTADN (211 aa)) are extracellular. Asn-52 carries an N-linked (GlcNAc...) asparagine glycan. A helical membrane pass occupies residues 240-261 (LIPVYCSILAAVVVGLVAYIAF). Topologically, residues 262-416 (KRWNSCKQNK…YSESTATSPV (155 aa)) are cytoplasmic. Composition is skewed to polar residues over residues 270–284 (NKQG…QTPS) and 294–315 (SGIS…STQG). Residues 270–328 (NKQGANNRPVNQTPSPEGEKLHSDSGISVDSQSLHDQQPPNQSTQGPAPKGDGSLYASL) form a disordered region. One can recognise a Death domain in the interval 333 to 410 (QEEVEKLLSS…DIAESLYSES (78 aa)).

In terms of assembly, homodimer; disulfide-linked. Heterodimer with SORCS2. The extracellular domains of the heterodimer bind NGF. In terms of processing, N- and O-glycosylated. Post-translationally, phosphorylated on serine residues. In terms of tissue distribution, detected in embryonic dorsal root ganglion and retina.

It localises to the cell membrane. The protein resides in the perikaryon. The protein localises to the cell projection. It is found in the growth cone. Its subcellular location is the dendritic spine. Its function is as follows. Low affinity receptor which can bind to NGF, BDNF, NTF3, and NTF4. Forms a heterodimeric receptor with SORCS2 that binds the precursor forms of NGF, BDNF and NTF3 with high affinity, and has much lower affinity for mature NGF and BDNF. Plays an important role in differentiation and survival of specific neuronal populations during development. Can mediate cell survival as well as cell death of neural cells. Plays a role in the inactivation of RHOA. Necessary for the circadian oscillation of clock genes in the suprachiasmatic nucleus (SCmgetaN) of the brain and in liver and of the genes involved in glucose and lipid metabolism in the liver. The protein is Tumor necrosis factor receptor superfamily member 16 (NGFR) of Gallus gallus (Chicken).